We begin with the raw amino-acid sequence, 361 residues long: Protein YIM1-2 (361 aa).

The protein belongs to the YIM1 family.

Its subcellular location is the lipid droplet. It is found in the mitochondrion. This Lachancea thermotolerans (strain ATCC 56472 / CBS 6340 / NRRL Y-8284) (Yeast) protein is Protein YIM1-2 (YIM1-2).